Consider the following 285-residue polypeptide: Eukaryotic translation initiation factor 3 subunit F-2 (285 aa).

The region spanning 11–145 (VFIKPLVLFQ…TRLYCAVEIG (135 aa)) is the MPN domain.

The protein belongs to the eIF-3 subunit F family. In terms of assembly, component of the eukaryotic translation initiation factor 3 (eIF-3) complex. The eIF-3 complex interacts with pix.

The protein resides in the cytoplasm. Component of the eukaryotic translation initiation factor 3 (eIF-3) complex, which is involved in protein synthesis of a specialized repertoire of mRNAs and, together with other initiation factors, stimulates binding of mRNA and methionyl-tRNAi to the 40S ribosome. The eIF-3 complex specifically targets and initiates translation of a subset of mRNAs involved in cell proliferation. This chain is Eukaryotic translation initiation factor 3 subunit F-2, found in Drosophila yakuba (Fruit fly).